The following is a 480-amino-acid chain: Coronin-2B (480 aa).

5 WD repeats span residues glycine 85 to asparagine 125, glycine 135 to aspartate 177, histidine 179 to glutamate 217, cysteine 220 to threonine 263, and glutamate 265 to threonine 308. Positions asparagine 436–asparagine 475 form a coiled coil.

The protein belongs to the WD repeat coronin family.

The protein resides in the cytoplasm. It localises to the cytoskeleton. In terms of biological role, may play a role in the reorganization of neuronal actin structure. The sequence is that of Coronin-2B (coro2b) from Xenopus tropicalis (Western clawed frog).